We begin with the raw amino-acid sequence, 1562 residues long: DNA-directed RNA polymerase subunit beta'' (1562 aa).

The disordered stretch occupies residues 1–22; it reads MVKKKKFKTKNIQNPPFSSQNS. A compositionally biased stretch (polar residues) spans 11–22; the sequence is NIQNPPFSSQNS. Zn(2+) contacts are provided by cysteine 275, cysteine 338, cysteine 345, and cysteine 348.

It belongs to the RNA polymerase beta' chain family. RpoC2 subfamily. In terms of assembly, in plastids the minimal PEP RNA polymerase catalytic core is composed of four subunits: alpha, beta, beta', and beta''. When a (nuclear-encoded) sigma factor is associated with the core the holoenzyme is formed, which can initiate transcription. The cofactor is Zn(2+).

The protein resides in the plastid. The protein localises to the chloroplast. It carries out the reaction RNA(n) + a ribonucleoside 5'-triphosphate = RNA(n+1) + diphosphate. In terms of biological role, DNA-dependent RNA polymerase catalyzes the transcription of DNA into RNA using the four ribonucleoside triphosphates as substrates. The sequence is that of DNA-directed RNA polymerase subunit beta'' from Chlorella vulgaris (Green alga).